The primary structure comprises 843 residues: Ribosome biogenesis protein ERB1 (843 aa).

2 disordered regions span residues 36–189 and 364–419; these read KKAA…RYIY and ADES…REYL. 3 stretches are compositionally biased toward acidic residues: residues 77 to 92, 106 to 139, and 163 to 172; these read VDED…YDLE, SDSE…EVPS, and ESNDLSDDNE. Positions 173–183 are enriched in basic and acidic residues; that stretch reads PNYRIEKDANG. The segment covering 379–396 has biased composition (pro residues); it reads PKLPPPGYEESYHPPPEY. Residues 397–406 show a composition bias toward basic and acidic residues; it reads LPDKKEKEEW. WD repeat units lie at residues 487 to 526, 530 to 570, 668 to 706, 709 to 754, 758 to 797, and 813 to 843; these read GHRG…QLWS, SDED…LELE, KGGG…LVKI, PGAR…RPYK, YHQK…DLLS, and TGDL…RLWM.

Belongs to the WD repeat BOP1/ERB1 family. As to quaternary structure, component of the NOP7 complex, composed of ERB1, NOP7 and YTM1. The complex is held together by ERB1, which interacts with NOP7 via its N-terminal domain and with YTM1 via a high-affinity interaction between the seven-bladed beta-propeller domains of the 2 proteins. The NOP7 complex associates with the 66S pre-ribosome.

It is found in the nucleus. The protein localises to the nucleolus. Its subcellular location is the nucleoplasm. In terms of biological role, component of the NOP7 complex, which is required for maturation of the 25S and 5.8S ribosomal RNAs and formation of the 60S ribosome. This chain is Ribosome biogenesis protein ERB1, found in Coccidioides immitis (strain RS) (Valley fever fungus).